Reading from the N-terminus, the 55-residue chain is Large ribosomal subunit protein bL33A (55 aa).

This sequence belongs to the bacterial ribosomal protein bL33 family.

The protein is Large ribosomal subunit protein bL33A of Salinispora tropica (strain ATCC BAA-916 / DSM 44818 / JCM 13857 / NBRC 105044 / CNB-440).